Consider the following 175-residue polypeptide: NADH-quinone oxidoreductase subunit I (175 aa).

2 consecutive 4Fe-4S ferredoxin-type domains span residues 69 to 98 (KRDE…IEAG) and 115 to 144 (KKFE…LDGP). [4Fe-4S] cluster-binding residues include cysteine 78, cysteine 81, cysteine 84, cysteine 88, cysteine 124, cysteine 127, cysteine 130, and cysteine 134.

Belongs to the complex I 23 kDa subunit family. As to quaternary structure, NDH-1 is composed of 14 different subunits. Subunits NuoA, H, J, K, L, M, N constitute the membrane sector of the complex. [4Fe-4S] cluster serves as cofactor.

The protein resides in the cell inner membrane. It carries out the reaction a quinone + NADH + 5 H(+)(in) = a quinol + NAD(+) + 4 H(+)(out). Its function is as follows. NDH-1 shuttles electrons from NADH, via FMN and iron-sulfur (Fe-S) centers, to quinones in the respiratory chain. The immediate electron acceptor for the enzyme in this species is believed to be ubiquinone. Couples the redox reaction to proton translocation (for every two electrons transferred, four hydrogen ions are translocated across the cytoplasmic membrane), and thus conserves the redox energy in a proton gradient. The polypeptide is NADH-quinone oxidoreductase subunit I (Leptospira borgpetersenii serovar Hardjo-bovis (strain JB197)).